A 391-amino-acid chain; its full sequence is MNASSRNVFDTLIRVLTESMFKHLRKWVVTRFFGHSRQRARLVSKDGRCNIEFGNVEAQSRFIFFVDIWTTVLDLKWRYKMTIFITAFLGSWFFFGLLWYAVAYIHKDLPEFHPSANHTPCVENINGLTSAFLFSLETQVTIGYGFRCVTEQCATAIFLLIFQSILGVIINSFMCGAILAKISRPKKRAKTITFSKNAVISKRGGKLCLLIRVANLRKSLLIGSHIYGKLLKTTVTPEGETIILDQININFVVDAGNENLFFISPLTIYHVIDHNSPFFHMAAETLLQQDFELVVFLDGTVESTSATCQVRTSYVPEEVLWGYRFAPIVSKTKEGKYRVDFHNFSKTVEVETPHCAMCLYNEKDVRARMKRGYDNPNFILSEVNETDDTKM.

Over Met-1–Trp-77 the chain is Cytoplasmic. Ser-44 is subject to Phosphoserine; by SGK1. The chain crosses the membrane as a helical span at residues Arg-78–Val-102. Topologically, residues Ala-103–Gly-127 are extracellular. N-linked (GlcNAc...) asparagine glycosylation occurs at Asn-117. An intramembrane region (helical; Pore-forming) is located at residues Leu-128–Gln-139. The pore-forming intramembrane region spans Val-140–Phe-146. The Selectivity filter signature appears at Thr-141 to Phe-146. Over Arg-147 to Thr-155 the chain is Extracellular. Residues Ala-156–Ala-177 form a helical membrane-spanning segment. Residues Ile-178–Met-391 lie on the Cytoplasmic side of the membrane. Residues Ala-180–Leu-207 form a polyphosphoinositide (PIP2)-binding region. Residue Gly-223 to Leu-230 participates in ATP binding.

It belongs to the inward rectifier-type potassium channel (TC 1.A.2.1) family. KCNJ1 subfamily. In terms of assembly, interacts with SGK1 and SLC9A3R2/NHERF2. In terms of processing, phosphorylation at Ser-44 by SGK1 is necessary for its expression at the cell membrane. In terms of tissue distribution, in the kidney and pancreatic islets. Lower levels in skeletal muscle, pancreas, spleen, brain, heart and liver.

The protein resides in the cell membrane. It carries out the reaction K(+)(in) = K(+)(out). Its activity is regulated as follows. Inhibited by WNK3. Activated by phosphatidylinositol 4,5 biphosphate (PtdIns(4,5)P2). Inward rectifier potassium channels are characterized by a greater tendency to allow potassium to flow into the cell rather than out of it. Their voltage dependence is regulated by the concentration of extracellular potassium; as external potassium is raised, the voltage range of the channel opening shifts to more positive voltages. The inward rectification is mainly due to the blockage of outward current by internal magnesium. This channel is activated by internal ATP and can be blocked by external barium. In the kidney, probably plays a major role in potassium homeostasis. The chain is ATP-sensitive inward rectifier potassium channel 1 (KCNJ1) from Homo sapiens (Human).